A 261-amino-acid polypeptide reads, in one-letter code: Phosphatidylglycerol--prolipoprotein diacylglyceryl transferase (261 aa).

3 consecutive transmembrane segments (helical) span residues Leu-20 to Ala-40, Ile-54 to Val-74, and Ile-88 to Val-108. Arg-139 is a binding site for a 1,2-diacyl-sn-glycero-3-phospho-(1'-sn-glycerol). 2 helical membrane-spanning segments follow: residues Met-175–Phe-195 and Ala-235–Tyr-255.

Belongs to the Lgt family.

Its subcellular location is the cell membrane. The enzyme catalyses L-cysteinyl-[prolipoprotein] + a 1,2-diacyl-sn-glycero-3-phospho-(1'-sn-glycerol) = an S-1,2-diacyl-sn-glyceryl-L-cysteinyl-[prolipoprotein] + sn-glycerol 1-phosphate + H(+). Its pathway is protein modification; lipoprotein biosynthesis (diacylglyceryl transfer). Functionally, catalyzes the transfer of the diacylglyceryl group from phosphatidylglycerol to the sulfhydryl group of the N-terminal cysteine of a prolipoprotein, the first step in the formation of mature lipoproteins. In Lactococcus lactis subsp. cremoris (strain MG1363), this protein is Phosphatidylglycerol--prolipoprotein diacylglyceryl transferase.